Reading from the N-terminus, the 363-residue chain is Histidinol-phosphate aminotransferase (363 aa).

Lys226 carries the N6-(pyridoxal phosphate)lysine modification.

Belongs to the class-II pyridoxal-phosphate-dependent aminotransferase family. Histidinol-phosphate aminotransferase subfamily. Homodimer. Pyridoxal 5'-phosphate is required as a cofactor.

It carries out the reaction L-histidinol phosphate + 2-oxoglutarate = 3-(imidazol-4-yl)-2-oxopropyl phosphate + L-glutamate. Its pathway is amino-acid biosynthesis; L-histidine biosynthesis; L-histidine from 5-phospho-alpha-D-ribose 1-diphosphate: step 7/9. The chain is Histidinol-phosphate aminotransferase from Campylobacter lari (strain RM2100 / D67 / ATCC BAA-1060).